A 4885-amino-acid chain; its full sequence is Centrosome-associated protein CEP530 (4885 aa).

The stretch at 1437–1528 forms a coiled coil; that stretch reads VAEYEAETRG…GREKDQLRSE (92 aa).

The protein resides in the cytoplasm. Its subcellular location is the cytoskeleton. It is found in the microtubule organizing center. The protein localises to the centrosome. In terms of biological role, required for proper nuclei segregation during the cell division. Plays a role in coordination of karyokinesis and cytokinesis during the tachyzoite cell cycle. The polypeptide is Centrosome-associated protein CEP530 (Toxoplasma gondii (strain ATCC 50611 / Me49)).